A 125-amino-acid chain; its full sequence is Fluoride-specific ion channel FluC (125 aa).

A run of 4 helical transmembrane segments spans residues 4 to 24 (VIYV…VGIV), 32 to 52 (FLPW…GLFA), 68 to 88 (LLIT…LDTV), and 100 to 120 (AFYV…GLAV). Na(+) is bound by residues G75 and T78.

Belongs to the fluoride channel Fluc/FEX (TC 1.A.43) family.

It localises to the cell inner membrane. The catalysed reaction is fluoride(in) = fluoride(out). Its activity is regulated as follows. Na(+) is not transported, but it plays an essential structural role and its presence is essential for fluoride channel function. Fluoride-specific ion channel. Important for reducing fluoride concentration in the cell, thus reducing its toxicity. The polypeptide is Fluoride-specific ion channel FluC (Allorhizobium ampelinum (strain ATCC BAA-846 / DSM 112012 / S4) (Agrobacterium vitis (strain S4))).